The following is a 233-amino-acid chain: Phosphatidylserine decarboxylase proenzyme (233 aa).

The active-site Schiff-base intermediate with substrate; via pyruvic acid is the Ser-190. A Pyruvic acid (Ser); by autocatalysis modification is found at Ser-190.

It belongs to the phosphatidylserine decarboxylase family. PSD-A subfamily. In terms of assembly, heterodimer of a large membrane-associated beta subunit and a small pyruvoyl-containing alpha subunit. Pyruvate serves as cofactor. Post-translationally, is synthesized initially as an inactive proenzyme. Formation of the active enzyme involves a self-maturation process in which the active site pyruvoyl group is generated from an internal serine residue via an autocatalytic post-translational modification. Two non-identical subunits are generated from the proenzyme in this reaction, and the pyruvate is formed at the N-terminus of the alpha chain, which is derived from the carboxyl end of the proenzyme. The post-translation cleavage follows an unusual pathway, termed non-hydrolytic serinolysis, in which the side chain hydroxyl group of the serine supplies its oxygen atom to form the C-terminus of the beta chain, while the remainder of the serine residue undergoes an oxidative deamination to produce ammonia and the pyruvoyl prosthetic group on the alpha chain.

Its subcellular location is the cell membrane. The enzyme catalyses a 1,2-diacyl-sn-glycero-3-phospho-L-serine + H(+) = a 1,2-diacyl-sn-glycero-3-phosphoethanolamine + CO2. It functions in the pathway phospholipid metabolism; phosphatidylethanolamine biosynthesis; phosphatidylethanolamine from CDP-diacylglycerol: step 2/2. In terms of biological role, catalyzes the formation of phosphatidylethanolamine (PtdEtn) from phosphatidylserine (PtdSer). The sequence is that of Phosphatidylserine decarboxylase proenzyme from Azorhizobium caulinodans (strain ATCC 43989 / DSM 5975 / JCM 20966 / LMG 6465 / NBRC 14845 / NCIMB 13405 / ORS 571).